Reading from the N-terminus, the 151-residue chain is Small ribosomal subunit protein uS15 (151 aa).

The disordered stretch occupies residues 1–20 (MARLHSGKRGSSGSTRPLRT).

This sequence belongs to the universal ribosomal protein uS15 family. In terms of assembly, part of the 30S ribosomal subunit.

The chain is Small ribosomal subunit protein uS15 from Methanococcus maripaludis (strain C7 / ATCC BAA-1331).